Consider the following 187-residue polypeptide: MLKYNIRGENIEVTEPIRDYVEKKIDKLERYFTETPDANVHVNLKVYSDKNAKVEVTIPLPNLVLRAEETSGDLYASIDLIVDKLERQIRKHKTKVNRKFRDKGAERDYFAYSDVNGSTPPEENEGDFDLEIVRTKQFSLKPMDSEEAVLQMNLLGHSFYVYTDAETNGTNIVYSRKDGKYGLIETN.

The protein belongs to the HPF/YfiA ribosome-associated protein family. Long HPF subfamily. Interacts with 100S ribosomes.

The protein resides in the cytoplasm. In terms of biological role, involved in 100S ribosome formation from 70S ribosomes; 100S ribosomes are probably translationally inactive. Ribosome hibernation may be used by the cell to decrease overall energy consumption under nutrient-limiting conditions. Unlike E.coli, 100S ribosomes are present from mid-exponential growth, peak during the transition from log to stationary phase and then decrease. In Listeria monocytogenes serotype 1/2a (strain 10403S), this protein is Ribosome hibernation promotion factor.